We begin with the raw amino-acid sequence, 376 residues long: Calcium uniporter protein, mitochondrial (376 aa).

The transit peptide at Met1–His34 directs the protein to the mitochondrion. Residues Gln35 to Thr257 lie on the Mitochondrial matrix side of the membrane. Positions Val99–Arg189 are N-terminal MCU domain. Residues Thr213–Arg254 are a coiled coil. Residues Trp258–Trp280 form a helical membrane-spanning segment. At Glu281–Pro289 the chain is on the mitochondrial intermembrane side. The short motif at Trp284 to Tyr292 is the Selectivity filter element. Glu288 provides a ligand contact to Ca(2+). Residues Val290–Thr309 form a helical membrane-spanning segment. Residues Thr309–Leu314 are juxtamembrane helix. Topologically, residues Arg310–Asp376 are mitochondrial matrix. Residues Phe336–Gln363 adopt a coiled-coil conformation.

Belongs to the MCU (TC 1.A.77) family. Homotetramer. Component of the uniplex complex.

Its subcellular location is the mitochondrion inner membrane. It catalyses the reaction Ca(2+)(in) = Ca(2+)(out). With respect to regulation, MCU channel activity is regulated by the heterodimer composed of micu1 and micu2, which act as calcium-sensors. At low calcium levels, micu1 occludes the pore of the MCU channel, preventing mitochondrial calcium uptake. At higher calcium levels, calcium-binding to micu1 and micu2 induces a conformational change that weakens mcu-micu1 interactions and moves the micu1-micu2 heterodimer away from the pore, allowing calcium permeation through the channel. MCU channel activity is gated by emre/smdt1 via the juxtamembrane helix loop. Inhibited by ruthenium red or its derivative Ru360. Channel-forming and calcium-conducting subunit of the mitochondrial inner membrane calcium uniporter complex (uniplex), which mediates calcium uptake into the mitochondrial matrix. Mcu channel activity is regulated by the calcium-sensor subunits of the uniplex micu1 and micu2. Mitochondrial calcium homeostasis plays key roles in cellular physiology and regulates ATP production, cytoplasmic calcium signals and activation of cell death pathways. Involved in buffering the amplitude of systolic calcium rises in cardiomyocytes. While dispensable for baseline homeostatic cardiac function, acts as a key regulator of short-term mitochondrial calcium loading underlying a 'fight-or-flight' response during acute stress: acts by mediating a rapid increase of mitochondrial calcium in pacemaker cells. Mitochondrial calcium uptake in skeletal muscle cells is involved in muscle size in adults. This is Calcium uniporter protein, mitochondrial from Danio rerio (Zebrafish).